The sequence spans 235 residues: Casparian strip membrane protein 2 (235 aa).

Residues 1 to 70 (MTSESATVIQ…RSGAEGFRRC (70 aa)) lie on the Cytoplasmic side of the membrane. Residues 71-91 (LAVIDFLLRVAAFGPTLAAAI) form a helical membrane-spanning segment. The Extracellular segment spans residues 92–118 (STGTADERLSVFTNFFQFHARFDDFPA). A helical transmembrane segment spans residues 119-139 (FTFFLVANAVAAGYLVLSLPF). Topologically, residues 140-162 (SVVVILRPNKATGGVRLLLLLCD) are cytoplasmic. Residues 163–183 (VLIMALLTAAGAAAAAIVYVA) traverse the membrane as a helical segment. The Extracellular portion of the chain corresponds to 184 to 210 (HSGNRRANWVPICMQFHGFCQRTSGSV). Residues 211-231 (VATFLAVLVFIVLILMAACVI) form a helical membrane-spanning segment. The Cytoplasmic segment spans residues 232–235 (RRSK).

The protein belongs to the Casparian strip membrane proteins (CASP) family. As to quaternary structure, homodimer and heterodimers.

It localises to the cell membrane. Regulates membrane-cell wall junctions and localized cell wall deposition. Required for establishment of the Casparian strip membrane domain (CSD) and the subsequent formation of Casparian strips, a cell wall modification of the root endodermis that determines an apoplastic barrier between the intraorganismal apoplasm and the extraorganismal apoplasm and prevents lateral diffusion. The sequence is that of Casparian strip membrane protein 2 from Sorghum bicolor (Sorghum).